Consider the following 597-residue polypeptide: Elongation factor 4 (597 aa).

Residues Lys2–Glu184 form the tr-type G domain. GTP contacts are provided by residues Asp14–Thr19 and Asn131–Asp134.

Belongs to the TRAFAC class translation factor GTPase superfamily. Classic translation factor GTPase family. LepA subfamily.

The protein resides in the cell inner membrane. It carries out the reaction GTP + H2O = GDP + phosphate + H(+). In terms of biological role, required for accurate and efficient protein synthesis under certain stress conditions. May act as a fidelity factor of the translation reaction, by catalyzing a one-codon backward translocation of tRNAs on improperly translocated ribosomes. Back-translocation proceeds from a post-translocation (POST) complex to a pre-translocation (PRE) complex, thus giving elongation factor G a second chance to translocate the tRNAs correctly. Binds to ribosomes in a GTP-dependent manner. The polypeptide is Elongation factor 4 (Vibrio vulnificus (strain CMCP6)).